We begin with the raw amino-acid sequence, 128 residues long: Small ribosomal subunit protein uS9 (128 aa).

The disordered stretch occupies residues 106–128 (SRKVERKKPGRPKARKKFQFSKR). Residues 109 to 128 (VERKKPGRPKARKKFQFSKR) are compositionally biased toward basic residues.

Belongs to the universal ribosomal protein uS9 family.

The polypeptide is Small ribosomal subunit protein uS9 (Azobacteroides pseudotrichonymphae genomovar. CFP2).